The sequence spans 326 residues: Fructokinase (326 aa).

The segment at 275–326 is disordered; it reads EQALRNGPDPRRQSRRRHRLPRRRQSTLGARDWSLRLEQDSDPHPPDDTFSP. A compositionally biased stretch (basic residues) spans 287-299; the sequence is QSRRRHRLPRRRQ. Basic and acidic residues predominate over residues 307 to 326; that stretch reads WSLRLEQDSDPHPPDDTFSP.

The protein belongs to the carbohydrate kinase PfkB family.

The catalysed reaction is D-fructose + ATP = D-fructose 6-phosphate + ADP + H(+). The sequence is that of Fructokinase (frk) from Rhizobium leguminosarum bv. trifolii.